The sequence spans 62 residues: Conotoxin Qc5.1 (62 aa).

Positions 1 to 22 (MRCVPVFIILLLLSPSAPSVDA) are cleaved as a signal peptide. The propeptide occupies 23-48 (HPMTKDDVPQASFHDDAKRTLQVPWM). Val60 carries the valine amide modification.

The protein belongs to the conotoxin T superfamily. In terms of processing, contains 2 disulfide bonds that can be either 'C1-C3, C2-C4' or 'C1-C4, C2-C3', since these disulfide connectivities have been observed for conotoxins with cysteine framework V (for examples, see AC P0DQQ7 and AC P81755). In terms of tissue distribution, expressed by the venom duct.

The protein resides in the secreted. The polypeptide is Conotoxin Qc5.1 (Conus quercinus (Oak cone)).